The following is a 143-amino-acid chain: Hexaprenyl-diphosphate synthase small subunit ((2E,6E)-farnesyl-diphosphate specific) (143 aa).

As to quaternary structure, dimer of heterodimer or heterotetramer composed of a small (Hexs-a) and large (Hexs-B) subunit.

The enzyme catalyses 3 isopentenyl diphosphate + (2E,6E)-farnesyl diphosphate = all-trans-hexaprenyl diphosphate + 3 diphosphate. Its function is as follows. Catalyzes the condensation of three molecules of isopentenyl diphosphate with farnesyl diphosphate (FPP) to yield (all-E)-hexaprenyl diphosphate (HexPP; C30), the precursor of the prenyl side chain of menaquinone-6. Large subunit Hexs-B catalyzes the condensation reaction and the final product chain length is cooperatively regulated by both the Hexs-A and Hexs-B subunits using the whole size of the hydrophobic cleft as a ruler. The sequence is that of Hexaprenyl-diphosphate synthase small subunit ((2E,6E)-farnesyl-diphosphate specific) (hexs-a) from Micrococcus luteus (Micrococcus lysodeikticus).